The chain runs to 596 residues: Pumilio homolog 12 (596 aa).

Positions 254-596 constitute a PUM-HD domain; the sequence is LNEDLTMSLN…KVLSALSSKK (343 aa). Pumilio repeat units lie at residues 277 to 312, 313 to 348, 349 to 388, 389 to 424, 425 to 460, 461 to 496, 497 to 532, and 533 to 570; these read EARG…MIFN, EIID…QIVH, SITR…IIIS, ALKH…FLFE, AAIT…HLVS, EIAS…EILE, QLEG…RIIR, and ELIN…LLVD.

The protein resides in the cytoplasm. Its subcellular location is the nucleus. Sequence-specific RNA-binding protein that regulates translation and mRNA stability by binding the 3'-UTR of target mRNAs. The protein is Pumilio homolog 12 (APUM12) of Arabidopsis thaliana (Mouse-ear cress).